A 350-amino-acid chain; its full sequence is Holliday junction branch migration complex subunit RuvB (350 aa).

The segment at T4–Y184 is large ATPase domain (RuvB-L). ATP-binding positions include I23, R24, G65, K68, T69, T70, E131 to Y133, R174, Y184, and R221. T69 is a Mg(2+) binding site. The segment at A185–H255 is small ATPAse domain (RuvB-S). Residues R258 to A350 form a head domain (RuvB-H) region. Residues R294, R313, and R318 each coordinate DNA.

This sequence belongs to the RuvB family. As to quaternary structure, homohexamer. Forms an RuvA(8)-RuvB(12)-Holliday junction (HJ) complex. HJ DNA is sandwiched between 2 RuvA tetramers; dsDNA enters through RuvA and exits via RuvB. An RuvB hexamer assembles on each DNA strand where it exits the tetramer. Each RuvB hexamer is contacted by two RuvA subunits (via domain III) on 2 adjacent RuvB subunits; this complex drives branch migration. In the full resolvosome a probable DNA-RuvA(4)-RuvB(12)-RuvC(2) complex forms which resolves the HJ.

It localises to the cytoplasm. It carries out the reaction ATP + H2O = ADP + phosphate + H(+). The RuvA-RuvB-RuvC complex processes Holliday junction (HJ) DNA during genetic recombination and DNA repair, while the RuvA-RuvB complex plays an important role in the rescue of blocked DNA replication forks via replication fork reversal (RFR). RuvA specifically binds to HJ cruciform DNA, conferring on it an open structure. The RuvB hexamer acts as an ATP-dependent pump, pulling dsDNA into and through the RuvAB complex. RuvB forms 2 homohexamers on either side of HJ DNA bound by 1 or 2 RuvA tetramers; 4 subunits per hexamer contact DNA at a time. Coordinated motions by a converter formed by DNA-disengaged RuvB subunits stimulates ATP hydrolysis and nucleotide exchange. Immobilization of the converter enables RuvB to convert the ATP-contained energy into a lever motion, pulling 2 nucleotides of DNA out of the RuvA tetramer per ATP hydrolyzed, thus driving DNA branch migration. The RuvB motors rotate together with the DNA substrate, which together with the progressing nucleotide cycle form the mechanistic basis for DNA recombination by continuous HJ branch migration. Branch migration allows RuvC to scan DNA until it finds its consensus sequence, where it cleaves and resolves cruciform DNA. In Chromohalobacter salexigens (strain ATCC BAA-138 / DSM 3043 / CIP 106854 / NCIMB 13768 / 1H11), this protein is Holliday junction branch migration complex subunit RuvB.